A 312-amino-acid chain; its full sequence is Very-long-chain 3-oxoacyl-CoA reductase (312 aa).

A helical membrane pass occupies residues 4–24; that stretch reads ALPAAGFLYWVGAGTVAYLAL. An NADP(+)-binding site is contributed by 50–79; sequence GEWAVVTGSTDGIGKSYAEELAKHGMKVVL. Helical transmembrane passes span 182–202 and 271–291; these read GAIL…LTIY and GYLI…WIYL. Position 189 (Ser189) interacts with substrate. The active-site Proton acceptor is the Tyr202. The Di-lysine motif motif lies at 308–312; sequence KTKKN.

This sequence belongs to the short-chain dehydrogenases/reductases (SDR) family. 17-beta-HSD 3 subfamily. Interacts with ELOVL1 and LASS2. Expressed in most tissues tested. Highly expressed in the ovary and mammary. Expressed in platelets.

It is found in the endoplasmic reticulum membrane. The enzyme catalyses a very-long-chain (3R)-3-hydroxyacyl-CoA + NADP(+) = a very-long-chain 3-oxoacyl-CoA + NADPH + H(+). The catalysed reaction is 17beta-estradiol + NAD(+) = estrone + NADH + H(+). It catalyses the reaction 17beta-estradiol + NADP(+) = estrone + NADPH + H(+). It carries out the reaction 3-oxooctadecanoyl-CoA + NADPH + H(+) = (3R)-hydroxyoctadecanoyl-CoA + NADP(+). The enzyme catalyses (7Z,10Z,13Z,16Z)-3-oxodocosatetraenoyl-CoA + NADPH + H(+) = (3R)-hydroxy-(7Z,10Z,13Z,16Z)-docosatetraenoyl-CoA + NADP(+). The catalysed reaction is 3-oxo-(7Z,10Z,13Z,16Z,19Z)-docosapentaenoyl-CoA + NADPH + H(+) = (3R)-hydroxy-(7Z,10Z,13Z,16Z,19Z)-docosapentaenoyl-CoA + NADP(+). It catalyses the reaction (8Z,11Z,14Z)-3-oxoeicosatrienoyl-CoA + NADPH + H(+) = (3R)-hydroxy-(8Z,11Z,14Z)-eicosatrienoyl-CoA + NADP(+). The protein operates within lipid metabolism; fatty acid biosynthesis. It participates in steroid biosynthesis; estrogen biosynthesis. Its function is as follows. Catalyzes the second of the four reactions of the long-chain fatty acids elongation cycle. This endoplasmic reticulum-bound enzymatic process, allows the addition of two carbons to the chain of long- and very long-chain fatty acids/VLCFAs per cycle. This enzyme has a 3-ketoacyl-CoA reductase activity, reducing 3-ketoacyl-CoA to 3-hydroxyacyl-CoA, within each cycle of fatty acid elongation. Thereby, it may participate in the production of VLCFAs of different chain lengths that are involved in multiple biological processes as precursors of membrane lipids and lipid mediators. May also catalyze the transformation of estrone (E1) into estradiol (E2) and play a role in estrogen formation. The chain is Very-long-chain 3-oxoacyl-CoA reductase from Homo sapiens (Human).